Consider the following 79-residue polypeptide: Conotoxin 12 (79 aa).

A signal peptide spans 1–22 (MKLTCVLIITVLFLTASQLITA). A propeptide spanning residues 23–47 (DYSRDQRQYRAVRLGDEMRNFKGAR) is cleaved from the precursor. 3 disulfide bridges follow: cysteine 49-cysteine 62, cysteine 56-cysteine 67, and cysteine 61-cysteine 77.

Belongs to the conotoxin O1 superfamily. In terms of tissue distribution, expressed by the venom duct.

The protein localises to the secreted. In Conus vexillum (Flag cone), this protein is Conotoxin 12.